Consider the following 307-residue polypeptide: Sex-lethal homolog (307 aa).

RRM domains follow at residues 85-163 and 171-251; these read TNLI…YARP and TNLY…LAEE. Residues 285-299 show a composition bias toward basic residues; it reads HRGRHNKNRNQKPHP. The segment at 285-307 is disordered; sequence HRGRHNKNRNQKPHPYHNPQKFI.

The protein localises to the nucleus. Functionally, unknown; apparently not involved in somatic sex determination. This is Sex-lethal homolog (SXL) from Chrysomya rufifacies (Hairy maggot blowfly).